We begin with the raw amino-acid sequence, 304 residues long: Proteasome subunit beta (304 aa).

A propeptide spans 1–65 (removed in mature form; by autocatalysis); that stretch reads MTWPHFEQLA…LTPTDAVPHG (65 aa). Thr66 functions as the Nucleophile in the catalytic mechanism.

It belongs to the peptidase T1B family. As to quaternary structure, the 20S proteasome core is composed of 14 alpha and 14 beta subunits that assemble into four stacked heptameric rings, resulting in a barrel-shaped structure. The two inner rings, each composed of seven catalytic beta subunits, are sandwiched by two outer rings, each composed of seven alpha subunits. The catalytic chamber with the active sites is on the inside of the barrel. Has a gated structure, the ends of the cylinder being occluded by the N-termini of the alpha-subunits. Is capped by the proteasome-associated ATPase, ARC.

Its subcellular location is the cytoplasm. The enzyme catalyses Cleavage of peptide bonds with very broad specificity.. It participates in protein degradation; proteasomal Pup-dependent pathway. The formation of the proteasomal ATPase ARC-20S proteasome complex, likely via the docking of the C-termini of ARC into the intersubunit pockets in the alpha-rings, may trigger opening of the gate for substrate entry. Interconversion between the open-gate and close-gate conformations leads to a dynamic regulation of the 20S proteasome proteolysis activity. Functionally, component of the proteasome core, a large protease complex with broad specificity involved in protein degradation. The chain is Proteasome subunit beta from Mycobacterium sp. (strain JLS).